Here is a 236-residue protein sequence, read N- to C-terminus: MQKRELIYEGKGKKMYATDDANLLIAEFKDDLTAFDAQKRGNEAGKGALNNKISTQIFKILKEKGIETDLVETISDTEQLVKKCEIIPLEVVVRNIATGSLTKRLAIKEGTVLPFPLVEFYFKNDELHDPLVTDEHCLVMGLVKSEKDLQTLRHLAREINSILFKFFEERKLKLVDFKIEFGMDKDGNILLADEISPDSCRFWDADTNEKLDKDRFRQDLGSVKVAYEEVLRRILS.

This sequence belongs to the SAICAR synthetase family.

The catalysed reaction is 5-amino-1-(5-phospho-D-ribosyl)imidazole-4-carboxylate + L-aspartate + ATP = (2S)-2-[5-amino-1-(5-phospho-beta-D-ribosyl)imidazole-4-carboxamido]succinate + ADP + phosphate + 2 H(+). It functions in the pathway purine metabolism; IMP biosynthesis via de novo pathway; 5-amino-1-(5-phospho-D-ribosyl)imidazole-4-carboxamide from 5-amino-1-(5-phospho-D-ribosyl)imidazole-4-carboxylate: step 1/2. In Campylobacter curvus (strain 525.92), this protein is Phosphoribosylaminoimidazole-succinocarboxamide synthase.